We begin with the raw amino-acid sequence, 43 residues long: RCKESKPGKNGCRGIDDKHWNSQCKTSQTYVRALSKENNKYVG.

It belongs to the NGF-beta family.

It localises to the secreted. In terms of biological role, seems to promote the survival of visceral and proprioceptive sensory neurons. The polypeptide is Neurotrophin-3 (ntf3) (Raja clavata (Thornback ray)).